A 687-amino-acid chain; its full sequence is MGQEDQELLIRGGSKHPSAEHLNNGDSGAASQSCINQGFGQAKNYGTLLPPSPPEDSGSGSGQLAENLTYAWHNMDIFGAVNQPGSGWRQLVNRTRGLFCNERHIPAPRKHLLKNVCGVAYPGELLAVMGSSGAGKTTLLNALAFRSPQGIQVSPSGMRLLNGQPVDAKEMQARCAYVQQDDLFIGSLTAREHLIFQAMVRMPRHLTYRQRVARVDQVIQELSLSKCQHTIIGVPGRVKGLSGGERKRLAFASEALTDPPLLICDEPTSGLDSFTAHSVVQVLKKLSQKGKTVILTIHQPSSELFELFDKILLMAEGRVAFLGTPSEAVDFFSYVGAQCPTNYNPADFYVQVLAVVPGREIESRDRIAKICDNFAISKVARDMEQLLATKNLEKPLEQPENGYTYKATWFMQFRAVLWRSWLSVLKEPLLVKVRLIQTTMVAILIGLIFLGQQLTQVGVMNINGAIFLFLTNMTFQNVFATINVFTSELPVFMREARSRLYRCDTYFLGKTIAELPLFLTVPLVFTAIAYPMIGLRAGVLHFFNCLALVTLVANVSTSFGYLISCASSSTSMALSVGPPVIIPFLLFGGFFLNSGSVPVYLKWLSYLSWFRYANEGLLINQWADVEPGEISCTSSNTTCPSSGKVILETLNFSAADLPLDYVGLAILIVSFRVLAYLALRLRARRKE.

Residues 1 to 30 form a disordered region; it reads MGQEDQELLIRGGSKHPSAEHLNNGDSGAA. Residues 1–419 are Cytoplasmic-facing; it reads MGQEDQELLI…FMQFRAVLWR (419 aa). The ABC transporter domain occupies 93–341; the sequence is NRTRGLFCNE…FSYVGAQCPT (249 aa). 130–137 is a binding site for ATP; the sequence is GSSGAGKT. A helical membrane pass occupies residues 420–440; sequence SWLSVLKEPLLVKVRLIQTTM. The Extracellular segment spans residues 441-460; it reads VAILIGLIFLGQQLTQVGVM. Residues 461-481 form a helical membrane-spanning segment; it reads NINGAIFLFLTNMTFQNVFAT. The Cytoplasmic segment spans residues 482–497; that stretch reads INVFTSELPVFMREAR. A helical membrane pass occupies residues 498–518; sequence SRLYRCDTYFLGKTIAELPLF. The Extracellular segment spans residues 519 to 531; sequence LTVPLVFTAIAYP. The helical transmembrane segment at 532–552 threads the bilayer; sequence MIGLRAGVLHFFNCLALVTLV. Residues 553–568 lie on the Cytoplasmic side of the membrane; the sequence is ANVSTSFGYLISCASS. Residues 569–589 traverse the membrane as a helical segment; that stretch reads STSMALSVGPPVIIPFLLFGG. Topologically, residues 590–644 are extracellular; that stretch reads FFLNSGSVPVYLKWLSYLSWFRYANEGLLINQWADVEPGEISCTSSNTTCPSSGK. Asn-636 carries N-linked (GlcNAc...) asparagine glycosylation. The helical transmembrane segment at 645 to 665 threads the bilayer; it reads VILETLNFSAADLPLDYVGLA. Residues 666 to 675 lie on the Cytoplasmic side of the membrane; that stretch reads ILIVSFRVLA.

It belongs to the ABC transporter superfamily. ABCG family. Eye pigment precursor importer (TC 3.A.1.204) subfamily. As to quaternary structure, may form a heterodimer with bw/brown. May form a heterodimer with st/scarlet. As to expression, expressed in the head (at protein level). Expressed in the eye, specifically in retina primary pigment cells, in the basement membrane of the base of secondary and tertiary pigment cells, and in retinula cells (at protein level). Expressed in the retina underlying lamina in the epithelial glia that surrounds the array of lamina cartridges (at protein level). Weakly expressed in photoreceptors, specifically in terminals of R1-R6, R7 and R8 (at protein level). Expressed at very low levels in medulla and central brain (at protein level). Expressed in principal cells of the Malpighian tubules.

The protein localises to the cytoplasmic vesicle membrane. It catalyses the reaction 3',5'-cyclic GMP(in) + ATP + H2O = 3',5'-cyclic GMP(out) + ADP + phosphate + H(+). The catalysed reaction is guanine(out) + ATP + H2O = guanine(in) + ADP + phosphate + H(+). It carries out the reaction riboflavin(in) + ATP + H2O = riboflavin(out) + ADP + phosphate + H(+). The enzyme catalyses (6S)-5,6,7,8-tetrahydrofolate(out) + ATP + H2O = (6S)-5,6,7,8-tetrahydrofolate(in) + ADP + phosphate + H(+). It catalyses the reaction L-tryptophan(out) + ATP + H2O = L-tryptophan(in) + ADP + phosphate + H(+). The catalysed reaction is L-kynurenine(out) + ATP + H2O = L-kynurenine(in) + ADP + phosphate + H(+). It carries out the reaction xanthine(out) + ATP + H2O = xanthine(in) + ADP + phosphate + H(+). In terms of biological role, ATP-dependent transporter of the ATP-binding cassette (ABC) family which transports various molecules including bioamines, neurotransmitters, metabolic intermediates and second messengers. In the eye, required for the transport of the eye red and brown pigment precursors, guanine and tryptophan, into pigment cell granules. Probably in association with bw/brown, involved in the transport of guanine. Probably in association with st/scarlet involved in the transport of kynurenine and probably tryptophan. Involved in the transport of kynurenine in pupal eyes. May play a role in histamine uptake by the lamina epithelial glia which surrounds photoreceptors R1-R6. In Malpighian tubules, involved in the transport of cGMP, guanine, xanthine, riboflavin, kynurenine and tryptophan. Probably in association with br/brown, involved in aging-induced intestinal stem cell proliferation in the midgut by regulating tetrahydrofolate transport. Probably in association with st/scarlet, plays a role in zinc storage granule biogenesis in Malpighian tubule principal epithelial cells. In Drosophila melanogaster (Fruit fly), this protein is Protein white.